Here is a 422-residue protein sequence, read N- to C-terminus: MSEFNFISRLHNRGLISHITNEDNLSKLIENKSISLYCGFDPTEESLHIGHLLPLIMLKRFQIAGHRPIILIGGATSLIGDPSFKEKERVFNSNYNVNIWTEKITKQISCFLDFNCGKNSAVLLNNNTWFKQINILSFLRDVGKYFSVNTMINRAAVKQRITRPDQGISFTEFSYNLLQAYDFFILNQQYQVDLQIGGADQWGNISSGMHLIHRKTKRVVYGLTVPLLIQSNGIKFGKTESGTVWLDSNKTSPYKFYQFWMNIEDANVYYFLKLFTFIKVSEINKLEKNKNIKNQIINDKSLLAKHITQLVHGKEKLLAAERITKFLFLKNTTHIEESDLQQLKQDGIPFIEVSNVKDLQEALVLTSLAQSRTQAKNMIISNSISINTEKIRKNHIFHEKDKLFGKFTLLSRGKKQHSLLCW.

L-tyrosine is bound at residue Y37. Residues P42–H51 carry the 'HIGH' region motif. 2 residues coordinate L-tyrosine: Y175 and Q179. The 'KMSKS' region signature appears at K235–T239. ATP is bound at residue K238. An S4 RNA-binding domain is found at K357–K414.

This sequence belongs to the class-I aminoacyl-tRNA synthetase family. TyrS type 1 subfamily. Homodimer.

It localises to the cytoplasm. It catalyses the reaction tRNA(Tyr) + L-tyrosine + ATP = L-tyrosyl-tRNA(Tyr) + AMP + diphosphate + H(+). Its function is as follows. Catalyzes the attachment of tyrosine to tRNA(Tyr) in a two-step reaction: tyrosine is first activated by ATP to form Tyr-AMP and then transferred to the acceptor end of tRNA(Tyr). The chain is Tyrosine--tRNA ligase from Buchnera aphidicola subsp. Acyrthosiphon pisum (strain 5A).